A 223-amino-acid chain; its full sequence is Putative nudix hydrolase 2 (223 aa).

Residues 72–213 form the Nudix hydrolase domain; that stretch reads ASADGVSIIA…SIVVESTLLA (142 aa). Positions 111–132 match the Nudix box motif; it reads GLIDAGETAQQAAIRELKEETG. 2 residues coordinate Mg(2+): Glu126 and Glu130.

Belongs to the Nudix hydrolase family. Requires Mg(2+) as cofactor. The cofactor is Mn(2+).

Its function is as follows. Probably mediates the hydrolysis of some nucleoside diphosphate derivatives. This chain is Putative nudix hydrolase 2 (ndx-2), found in Caenorhabditis elegans.